The chain runs to 303 residues: Nucleotide-binding protein Dvul_1502 (303 aa).

23 to 30 serves as a coordination point for ATP; sequence GLSGAGKS. 75–78 is a GTP binding site; sequence DLRE.

Belongs to the RapZ-like family.

Its function is as follows. Displays ATPase and GTPase activities. In Nitratidesulfovibrio vulgaris (strain DP4) (Desulfovibrio vulgaris), this protein is Nucleotide-binding protein Dvul_1502.